An 83-amino-acid chain; its full sequence is MVVIRLSRGGAKGRPFFNIVVADKRVRRDGRFIERLGFYNPTAKENEEGLRIMQDRLTYWKSVGAQSSPTVERLVKQAAKQMA.

This sequence belongs to the bacterial ribosomal protein bS16 family.

The sequence is that of Small ribosomal subunit protein bS16 from Verminephrobacter eiseniae (strain EF01-2).